The primary structure comprises 259 residues: Probable ABC transporter arginine-binding protein ArtJ (259 aa).

A signal peptide spans 1–25 (MIKQIGRFFRAFIFIMPLSLTSCES). Positions 38, 45, 96, 97, 99, 104, and 149 each coordinate L-arginine.

Belongs to the bacterial solute-binding protein 3 family.

The protein localises to the secreted. The protein resides in the cell surface. Its function is as follows. Probably part of an ABC transporter complex involved in arginine transport. Binds arginine. Interacts with host epithelial cells, suggesting a role in host-cell adhesion during infection. The sequence is that of Probable ABC transporter arginine-binding protein ArtJ from Chlamydia pneumoniae (Chlamydophila pneumoniae).